The chain runs to 229 residues: Flagellar L-ring protein (229 aa).

Positions 1–25 (MKQVRLLPSATVRAACAVAVAALAG) are cleaved as a signal peptide. Residue cysteine 26 is the site of N-palmitoyl cysteine attachment. A lipid anchor (S-diacylglycerol cysteine) is attached at cysteine 26.

The protein belongs to the FlgH family. In terms of assembly, the basal body constitutes a major portion of the flagellar organelle and consists of four rings (L,P,S, and M) mounted on a central rod.

Its subcellular location is the cell outer membrane. It is found in the bacterial flagellum basal body. Functionally, assembles around the rod to form the L-ring and probably protects the motor/basal body from shearing forces during rotation. The protein is Flagellar L-ring protein of Burkholderia vietnamiensis (strain G4 / LMG 22486) (Burkholderia cepacia (strain R1808)).